The chain runs to 364 residues: UDP-N-acetylglucosamine--N-acetylmuramyl-(pentapeptide) pyrophosphoryl-undecaprenol N-acetylglucosamine transferase (364 aa).

Residues 13-15 (TGG), N125, R165, S192, and Q293 each bind UDP-N-acetyl-alpha-D-glucosamine.

Belongs to the glycosyltransferase 28 family. MurG subfamily.

It is found in the cell inner membrane. The catalysed reaction is di-trans,octa-cis-undecaprenyl diphospho-N-acetyl-alpha-D-muramoyl-L-alanyl-D-glutamyl-meso-2,6-diaminopimeloyl-D-alanyl-D-alanine + UDP-N-acetyl-alpha-D-glucosamine = di-trans,octa-cis-undecaprenyl diphospho-[N-acetyl-alpha-D-glucosaminyl-(1-&gt;4)]-N-acetyl-alpha-D-muramoyl-L-alanyl-D-glutamyl-meso-2,6-diaminopimeloyl-D-alanyl-D-alanine + UDP + H(+). It participates in cell wall biogenesis; peptidoglycan biosynthesis. Cell wall formation. Catalyzes the transfer of a GlcNAc subunit on undecaprenyl-pyrophosphoryl-MurNAc-pentapeptide (lipid intermediate I) to form undecaprenyl-pyrophosphoryl-MurNAc-(pentapeptide)GlcNAc (lipid intermediate II). The protein is UDP-N-acetylglucosamine--N-acetylmuramyl-(pentapeptide) pyrophosphoryl-undecaprenol N-acetylglucosamine transferase of Cereibacter sphaeroides (strain ATCC 17029 / ATH 2.4.9) (Rhodobacter sphaeroides).